The sequence spans 487 residues: Cell wall protein TIR4 (487 aa).

An N-terminal signal peptide occupies residues 1 to 22 (MAYSKITLLAALAAIAYAQTQA). 11 repeat units span residues 137-148 (SSSVAPSSSEVV), 149-160 (SSSVAPSSSEVV), 161-172 (SSSVAPSSSEVV), 173-184 (SSSVASSSSEVA), 185-196 (SSSVAPSSSEVV), 197-208 (SSSVASSSSEVA), 209-220 (SSSVAPSSSEVV), 221-232 (SSSVAPSSSEVV), 233-244 (SSSVASSSSEVA), 245-256 (SSSVAPSSSEVV), and 257-268 (SSSVASSTSEAT). An 11 X 12 AA approximate tandem repeats, Ser-rich region spans residues 137–268 (SSSVAPSSSE…SVASSTSEAT (132 aa)). A disordered region spans residues 206-299 (EVASSSVAPS…SVSSSSAVSS (94 aa)). 5 N-linked (GlcNAc...) asparagine glycosylation sites follow: N327, N348, N368, N403, and N404. N465 is lipidated: GPI-anchor amidated asparagine. A propeptide spans 466-487 (GAAKAVIGMGAGALAAVAAMLL) (removed in mature form).

It belongs to the SRP1/TIP1 family. Post-translationally, the GPI-anchor is attached to the protein in the endoplasmic reticulum and serves to target the protein to the cell surface. There, the glucosamine-inositol phospholipid moiety is cleaved off and the GPI-modified mannoprotein is covalently attached via its lipidless GPI glycan remnant to the 1,6-beta-glucan of the outer cell wall layer.

Its subcellular location is the secreted. It is found in the cell wall. The protein resides in the membrane. Component of the cell wall. Required for anaerobic growth. The polypeptide is Cell wall protein TIR4 (TIR4) (Saccharomyces cerevisiae (strain ATCC 204508 / S288c) (Baker's yeast)).